The following is an 83-amino-acid chain: Cytochrome b559 subunit alpha (83 aa).

Residues 21 to 35 traverse the membrane as a helical segment; it reads VIHSITIPSLFIAGW. Residue His23 coordinates heme.

Belongs to the PsbE/PsbF family. Heterodimer of an alpha subunit and a beta subunit. PSII is composed of 1 copy each of membrane proteins PsbA, PsbB, PsbC, PsbD, PsbE, PsbF, PsbH, PsbI, PsbJ, PsbK, PsbL, PsbM, PsbT, PsbX, PsbY, PsbZ, Psb30/Ycf12, at least 3 peripheral proteins of the oxygen-evolving complex and a large number of cofactors. It forms dimeric complexes. Heme b is required as a cofactor.

The protein localises to the plastid. It localises to the chloroplast thylakoid membrane. Its function is as follows. This b-type cytochrome is tightly associated with the reaction center of photosystem II (PSII). PSII is a light-driven water:plastoquinone oxidoreductase that uses light energy to abstract electrons from H(2)O, generating O(2) and a proton gradient subsequently used for ATP formation. It consists of a core antenna complex that captures photons, and an electron transfer chain that converts photonic excitation into a charge separation. This chain is Cytochrome b559 subunit alpha, found in Oenothera berteroana (Bertero's evening primrose).